Reading from the N-terminus, the 155-residue chain is Large ribosomal subunit protein uL13 (155 aa).

This sequence belongs to the universal ribosomal protein uL13 family. In terms of assembly, part of the 50S ribosomal subunit.

In terms of biological role, this protein is one of the early assembly proteins of the 50S ribosomal subunit, although it is not seen to bind rRNA by itself. It is important during the early stages of 50S assembly. In Rickettsia conorii (strain ATCC VR-613 / Malish 7), this protein is Large ribosomal subunit protein uL13.